The primary structure comprises 603 residues: Chaperone protein DnaK (603 aa).

Phosphothreonine; by autocatalysis is present on Thr-175. A compositionally biased stretch (low complexity) spans 573–586 (AQQAQQQNPDNQNN). Positions 573-603 (AQQAQQQNPDNQNNNKDDVTEATVTDDSTKK) are disordered. The span at 594-603 (ATVTDDSTKK) shows a compositional bias: polar residues.

This sequence belongs to the heat shock protein 70 family.

Its function is as follows. Acts as a chaperone. The protein is Chaperone protein DnaK of Ureaplasma parvum serovar 3 (strain ATCC 27815 / 27 / NCTC 11736).